The following is a 365-amino-acid chain: S-type anion channel SLAH4 (365 aa).

Topologically, residues 1 to 25 are cytoplasmic; the sequence is MEIPSQEIHIMIDNTISRRKERKTN. The chain crosses the membrane as a helical span at residues 26-46; the sequence is LADAEPIVLMSVLSSLHAGYF. Over 47–73 the chain is Extracellular; it reads RISLSLCSQALLWKIMVHLHSELPSMA. Residues 74–94 traverse the membrane as a helical segment; the sequence is YYLLWYLALATQVSLCFLYAF. Residues 95–106 lie on the Cytoplasmic side of the membrane; the sequence is KCIFLFDMVKEE. A helical membrane pass occupies residues 107–127; sequence FSHYIGVNYLYAPSISCLLLL. The Extracellular segment spans residues 128–131; that stretch reads QSAP. A helical membrane pass occupies residues 132 to 152; it reads MIEPHSVLYQTLFWIFAVPVL. Residues 153–168 lie on the Cytoplasmic side of the membrane; the sequence is TLDTKLYGQWFTTEKR. A helical transmembrane segment spans residues 169-189; that stretch reads FLSIMANPASQVSVIANLVAA. The Extracellular segment spans residues 190–199; it reads RGAAEMGWKE. A helical transmembrane segment spans residues 200–220; sequence CALCLFSLGMVHYLVIFVTLY. Over 221–235 the chain is Cytoplasmic; the sequence is QRLPGGNNFPTTLRP. Residues 236–256 form a helical membrane-spanning segment; the sequence is VFFLFFAAPATASLAWNSICG. Residue Asn257 is a topological domain, extracellular. Residues 258 to 278 traverse the membrane as a helical segment; that stretch reads FDTIAKMLFFLSLFIFISLVC. The Cytoplasmic portion of the chain corresponds to 279 to 291; that stretch reads RPNLLKKSIKRFN. A helical transmembrane segment spans residues 292 to 312; that stretch reads VAWWAYSFPITFLALNSVQYA. At 313–321 the chain is on the extracellular side; it reads QEVKDHVAS. Residues 322 to 342 traverse the membrane as a helical segment; the sequence is VLMFIFSSMSVLIFISVMLLT. The Cytoplasmic portion of the chain corresponds to 343–365; it reads AANSKRLLRRDHVLWSSTGPKDK.

Belongs to the SLAC1 S-type anion channel family. As to quaternary structure, homotrimer.

Its subcellular location is the cell membrane. Its function is as follows. Slow, weak voltage-dependent S-type anion efflux channel involved in maintenance of anion homeostasis. The sequence is that of S-type anion channel SLAH4 (SLAH4) from Arabidopsis thaliana (Mouse-ear cress).